The sequence spans 268 residues: Unknown seed protein 30.1 (268 aa).

The signal sequence occupies residues 1–22 (MEFAHLTVLSLFCLAFVGITAT). Positions 68 to 259 (LFFEHDLHPR…GNKAAAWVPN (192 aa)) constitute a BURP domain.

The sequence is that of Unknown seed protein 30.1 from Vicia faba (Broad bean).